The primary structure comprises 489 residues: Ulvan Lyase-PL25 (489 aa).

The signal sequence occupies residues 1 to 31 (MNLNKTLRKNSPSGYKALLTFSIICGLMATG). Cys-32 carries the N-palmitoyl cysteine lipid modification. Cys-32 carries the S-diacylglycerol cysteine lipid modification. Asn-60 and Asn-122 together coordinate substrate. His-123 acts as the Proton donor in catalysis. Substrate contacts are provided by Lys-125 and His-143. The active-site Proton acceptor is the Tyr-188. Substrate is bound by residues Arg-204, His-208, and Tyr-246. Residue His-208 participates in Zn(2+) binding. Zn(2+)-binding residues include His-264, Cys-266, and His-278. A substrate-binding site is contributed by His-278.

This sequence belongs to the polysaccharide lyase 25 family.

Its subcellular location is the cell membrane. Its function is as follows. Ulvan lyase involved in ulvan degradation. Ulvan is the main polysaccharide component of the Ulvales (green seaweed) cell wall. It is composed of disaccharide building blocks comprising 3-sulfated rhamnose (Rha3S) linked to D-glucuronic acid (GlcA), L-iduronic acid (IduA), or D-xylose (Xyl). Ulvan lyase catalyzes the endolytic cleavage of the glycosidic bond between Rha3S and the uronic acids GlcA or IduA, producing oligosaccharides that have unsaturated 4-deoxy-L-threo-hex-4-enopyranosiduronic acid (deltaUA) at the non-reducing end. This results eventually in the degradation of the ulvan polysaccharide into deltaUA-Rha3S disaccharides and deltaUA-Rha3S-Xyl-Rha3S tetrasaccharides. The chain is Ulvan Lyase-PL25 from Pseudoalteromonas sp. (strain PLSV).